Here is a 946-residue protein sequence, read N- to C-terminus: Protein RRC1 (946 aa).

Disordered regions lie at residues 1–29 (MSSF…KAED) and 41–183 (SFQG…NLYV). Composition is skewed to basic and acidic residues over residues 15–29 (KHRE…KAED), 62–75 (DKPK…KSKD), and 98–147 (KGKE…DRQG). The region spanning 179 to 260 (TNLYVGNLSP…YELKIGWGKA (82 aa)) is the RRM domain. The stretch at 329-372 (VIDTLALYVLDGECAFEQAIMERGRGNPLFKFMFELGSKEHTYY) is one SURP motif repeat. Positions 437 to 582 (LTDPQRDEFE…GLRSTFLRSG (146 aa)) constitute a CID domain. The region spanning 631–665 (LMNLPIAELERRCRHNGLSLVGGRVMMVTRLLSLE) is the SAP domain. Disordered stretches follow at residues 740 to 797 (ASKW…EQRQ) and 836 to 946 (EVDY…RGTR). Over residues 757 to 767 (SSSSGSDNTGG) the composition is skewed to polar residues. Composition is skewed to basic and acidic residues over residues 772–781 (ADGEDLKGND), 854–868 (IIER…QESS), and 886–946 (STRE…RGTR).

As to quaternary structure, component of the SWAP1-SFPS-RRC1 splicing factor complex which modulates pre-mRNA splicing to promote photomorphogenesis. Interacts with SWAP1 in a light-independent manner. Expressed in leaves, inflorescence stems, roots, flower buds, open flowers and siliques.

The protein resides in the nucleus speckle. In terms of biological role, as a member of the SWAP1-SFPS-RRC1 splicing factor complex, modulates photomorphogenesis by regulating the gene expression and pre-messenger RNA (mRNA) alternative splicing of a large number of genes, including those involved in plant responses to light signaling. SR-like splicing factor required for phytochrome B (phyB) signal transduction and involved in phyB-dependent alternative splicing. This is Protein RRC1 from Arabidopsis thaliana (Mouse-ear cress).